The chain runs to 550 residues: T-complex protein 1 subunit eta (550 aa).

Residues 529–550 (SESANAGMMPPQGAGRGRGMPM) form a disordered region.

Belongs to the TCP-1 chaperonin family. In terms of assembly, heterooligomeric complex of about 850 to 900 kDa that forms two stacked rings, 12 to 16 nm in diameter.

The protein resides in the cytoplasm. Functionally, molecular chaperone; assists the folding of proteins upon ATP hydrolysis. Known to play a role, in vitro, in the folding of actin and tubulin. In yeast may play a role in mitotic spindle formation. The polypeptide is T-complex protein 1 subunit eta (CCT7) (Saccharomyces cerevisiae (strain ATCC 204508 / S288c) (Baker's yeast)).